A 159-amino-acid chain; its full sequence is Large ribosomal subunit protein uL30 (159 aa).

It belongs to the universal ribosomal protein uL30 family. Part of the 50S ribosomal subunit.

The sequence is that of Large ribosomal subunit protein uL30 from Ignicoccus hospitalis (strain KIN4/I / DSM 18386 / JCM 14125).